We begin with the raw amino-acid sequence, 79 residues long: uncharacterized protein (79 aa).

The protein belongs to the asfivirus D79L family.

This is an uncharacterized protein from African swine fever virus (isolate Tick/South Africa/Pretoriuskop Pr4/1996) (ASFV).